The sequence spans 156 residues: MGQTFEGHLVAEGLKVGIVVGRFNEFITSKLLGGAEDALRRHGASEADVDVAWVPGAFEIPFAAKKMAESGKYDAIITLGTVIRGSTPHFDYVCNEVAKGVGALNMSTGIPVIFGVLTTDTIEQAVERAGTKAGNKGWEAAAAAIEMANLSKELSK.

5-amino-6-(D-ribitylamino)uracil-binding positions include F23, 57 to 59 (AFE), and 81 to 83 (TVI). 86–87 (ST) is a (2S)-2-hydroxy-3-oxobutyl phosphate binding site. The active-site Proton donor is H89. 5-amino-6-(D-ribitylamino)uracil is bound at residue F114. (2S)-2-hydroxy-3-oxobutyl phosphate is bound at residue R128.

It belongs to the DMRL synthase family. As to quaternary structure, forms an icosahedral capsid composed of 60 subunits, arranged as a dodecamer of pentamers.

It catalyses the reaction (2S)-2-hydroxy-3-oxobutyl phosphate + 5-amino-6-(D-ribitylamino)uracil = 6,7-dimethyl-8-(1-D-ribityl)lumazine + phosphate + 2 H2O + H(+). Its pathway is cofactor biosynthesis; riboflavin biosynthesis; riboflavin from 2-hydroxy-3-oxobutyl phosphate and 5-amino-6-(D-ribitylamino)uracil: step 1/2. Functionally, catalyzes the formation of 6,7-dimethyl-8-ribityllumazine by condensation of 5-amino-6-(D-ribitylamino)uracil with 3,4-dihydroxy-2-butanone 4-phosphate. This is the penultimate step in the biosynthesis of riboflavin. The protein is 6,7-dimethyl-8-ribityllumazine synthase of Halalkalibacterium halodurans (strain ATCC BAA-125 / DSM 18197 / FERM 7344 / JCM 9153 / C-125) (Bacillus halodurans).